Here is a 424-residue protein sequence, read N- to C-terminus: Serine--tRNA ligase (424 aa).

233-235 (TAE) contacts L-serine. Residue 264-266 (RRE) participates in ATP binding. E287 lines the L-serine pocket. 351-354 (EISS) provides a ligand contact to ATP. An L-serine-binding site is contributed by S387.

Belongs to the class-II aminoacyl-tRNA synthetase family. Type-1 seryl-tRNA synthetase subfamily. In terms of assembly, homodimer. The tRNA molecule binds across the dimer.

It localises to the cytoplasm. The enzyme catalyses tRNA(Ser) + L-serine + ATP = L-seryl-tRNA(Ser) + AMP + diphosphate + H(+). It catalyses the reaction tRNA(Sec) + L-serine + ATP = L-seryl-tRNA(Sec) + AMP + diphosphate + H(+). The protein operates within aminoacyl-tRNA biosynthesis; selenocysteinyl-tRNA(Sec) biosynthesis; L-seryl-tRNA(Sec) from L-serine and tRNA(Sec): step 1/1. In terms of biological role, catalyzes the attachment of serine to tRNA(Ser). Is also able to aminoacylate tRNA(Sec) with serine, to form the misacylated tRNA L-seryl-tRNA(Sec), which will be further converted into selenocysteinyl-tRNA(Sec). This Acaryochloris marina (strain MBIC 11017) protein is Serine--tRNA ligase.